The following is a 114-amino-acid chain: Putative antiporter subunit mnhC2 (114 aa).

3 consecutive transmembrane segments (helical) span residues 3–23 (LILL…ILSI), 28–48 (IVIG…SMGT), and 72–92 (AIVL…LVLV).

It belongs to the CPA3 antiporters (TC 2.A.63) subunit C family. May form a heterooligomeric complex that consists of seven subunits: mnhA2, mnhB2, mnhC2, mnhD2, mnhE2, mnhF2 and mnhG2.

The protein resides in the cell membrane. The chain is Putative antiporter subunit mnhC2 (mnhC2) from Staphylococcus aureus (strain MRSA252).